The following is a 590-amino-acid chain: Cell division protein FtsZ 1 (590 aa).

GTP is bound by residues 24–28 (GGGGN), 111–113 (GTG), Glu-142, Arg-146, and Asp-190. Disordered regions lie at residues 346–372 (AAVP…QPLQ) and 524–590 (EATN…RQSS). The segment covering 534 to 546 (AAAPSAASQQRRP) has biased composition (low complexity). The segment covering 559–576 (GQLDDHGRAAPQMRSHED) has biased composition (basic and acidic residues).

Belongs to the FtsZ family. In terms of assembly, homodimer. Polymerizes to form a dynamic ring structure in a strictly GTP-dependent manner. Interacts directly with several other division proteins.

The protein localises to the cytoplasm. Functionally, essential cell division protein that forms a contractile ring structure (Z ring) at the future cell division site. The regulation of the ring assembly controls the timing and the location of cell division. One of the functions of the FtsZ ring is to recruit other cell division proteins to the septum to produce a new cell wall between the dividing cells. Binds GTP and shows GTPase activity. This chain is Cell division protein FtsZ 1, found in Rhizobium meliloti (strain 1021) (Ensifer meliloti).